Consider the following 370-residue polypeptide: MQTAARRSFDYDMPLIQTPTSACQIRQAWAKVADTPDRETADRLKDEIKALLKETNAVLVAHYYVDPLIQDLALETGGCVGDSLEMARFGAEHEAGTLVVAGVRFMGESAKILCPEKTVLMPDLEAECSLDLGCPEEAFSAFCDQHPDRTVVVYANTSAAVKARADWVVTSSVALEIVSYLKSRGEKLIWGPDRHLGDYICRETGADMLLWQGSCIVHNEFKGQELAALKAEHPDAVVLVHPESPQSVIELSDVVGSTSKLLKAAVSRPEKKFIVATDLGILHEMQKQAPDKQFIAAPTAGNGGSCKSCAFCPWMAMNSLGGIKYALTSGRNEILLDRKLGEAAKLPLQRMLDFAAGLKRGDVFNGMGPA.

Iminosuccinate contacts are provided by His62 and Ser83. Cys128 provides a ligand contact to [4Fe-4S] cluster. Iminosuccinate-binding positions include 154–156 and Ser171; that span reads YAN. Cys215 is a [4Fe-4S] cluster binding site. Iminosuccinate contacts are provided by residues 241 to 243 and Thr258; that span reads HPE. Cys312 contributes to the [4Fe-4S] cluster binding site.

This sequence belongs to the quinolinate synthase family. Type 1 subfamily. [4Fe-4S] cluster serves as cofactor.

It localises to the cytoplasm. It carries out the reaction iminosuccinate + dihydroxyacetone phosphate = quinolinate + phosphate + 2 H2O + H(+). It participates in cofactor biosynthesis; NAD(+) biosynthesis; quinolinate from iminoaspartate: step 1/1. Its function is as follows. Catalyzes the condensation of iminoaspartate with dihydroxyacetone phosphate to form quinolinate. This chain is Quinolinate synthase, found in Neisseria meningitidis serogroup A / serotype 4A (strain DSM 15465 / Z2491).